Here is a 493-residue protein sequence, read N- to C-terminus: uncharacterized protein (493 aa).

Serine 328 carries the post-translational modification Phosphoserine. The segment covering 466 to 486 (AESNSGRGQNSKTKTTSVNLS) has biased composition (polar residues). The segment at 466-493 (AESNSGRGQNSKTKTTSVNLSRNKRTRT) is disordered.

This is an uncharacterized protein from Schizosaccharomyces pombe (strain 972 / ATCC 24843) (Fission yeast).